The sequence spans 210 residues: Large ribosomal subunit protein uL4 (210 aa).

The segment covering 44–54 (KRQGTASTLTR) has biased composition (polar residues). A disordered region spans residues 44–94 (KRQGTASTLTRSEVRGGGRKPYKQKGTGRARQGSIRTPLRPGGGVIFGPKP). Residues 60 to 71 (GGRKPYKQKGTG) show a composition bias toward basic residues.

Belongs to the universal ribosomal protein uL4 family. As to quaternary structure, part of the 50S ribosomal subunit.

In terms of biological role, one of the primary rRNA binding proteins, this protein initially binds near the 5'-end of the 23S rRNA. It is important during the early stages of 50S assembly. It makes multiple contacts with different domains of the 23S rRNA in the assembled 50S subunit and ribosome. Functionally, forms part of the polypeptide exit tunnel. This is Large ribosomal subunit protein uL4 from Prochlorococcus marinus subsp. pastoris (strain CCMP1986 / NIES-2087 / MED4).